Here is a 201-residue protein sequence, read N- to C-terminus: Endoribonuclease YbeY (201 aa).

3 residues coordinate Zn(2+): H156, H160, and H166.

It belongs to the endoribonuclease YbeY family. Requires Zn(2+) as cofactor.

It is found in the cytoplasm. Single strand-specific metallo-endoribonuclease involved in late-stage 70S ribosome quality control and in maturation of the 3' terminus of the 16S rRNA. This Cupriavidus pinatubonensis (strain JMP 134 / LMG 1197) (Cupriavidus necator (strain JMP 134)) protein is Endoribonuclease YbeY.